Reading from the N-terminus, the 93-residue chain is Non-histone chromosomal protein 6A (93 aa).

2 disordered regions span residues 1 to 23 (MVTP…APKR) and 69 to 93 (PYEA…ATLA). Residues 7–16 (PKKRTTRKKK) are compositionally biased toward basic residues. Residues 21–89 (PKRALSAYMF…RYESEKELYN (69 aa)) constitute a DNA-binding region (HMG box). Over residues 69–87 (PYEAKAQADKKRYESEKEL) the composition is skewed to basic and acidic residues.

It belongs to the NHP6 family. Weakly associates with the stable SPT16-POB3 heterodimer to form the FACT (yFACT or SNP) complex, which is associated with nucleosomes. Multiple molecules of NHP6 (NHP6A and/or NHP6B) are required to recruit the SPT16-POB3 heterodimer to DNA.

The protein localises to the nucleus. The protein resides in the chromosome. Functionally, DNA-binding protein that induces severe bending of DNA. Required for DNA-binding by the FACT complex, a general chromatin factor that acts to reorganize nucleosomes. The FACT complex is involved in multiple processes that require DNA as a template such as mRNA elongation, DNA replication and DNA repair. Also augments the fidelity of transcription by RNA polymerase III independently of any role in the FACT complex. Required for transcriptional initiation fidelity of some but not all tRNA genes. Seems to be functionally redundant with NHP6B. The chain is Non-histone chromosomal protein 6A (NHP6A) from Saccharomyces cerevisiae (strain ATCC 204508 / S288c) (Baker's yeast).